The primary structure comprises 775 residues: Endothelin-converting enzyme-like 1 (775 aa).

The Cytoplasmic portion of the chain corresponds to 1-61 (MEAPYSMTAH…LPRWNRREVC (61 aa)). Residues 30 to 52 (GTSLPPGFPRGSGRSASGSRSGL) form a disordered region. A compositionally biased stretch (low complexity) spans 32–52 (SLPPGFPRGSGRSASGSRSGL). Residues 62 to 82 (LLSGLVFAAGLCAILAAMLAL) form a helical; Signal-anchor for type II membrane protein membrane-spanning segment. At 83 to 775 (KYLGPGAAGG…MNPVHKCSVW (693 aa)) the chain is on the lumenal side. The Peptidase M13 domain occupies 99–775 (GCPERKAFAR…MNPVHKCSVW (677 aa)). 4 disulfide bridges follow: cysteine 124-cysteine 760, cysteine 132-cysteine 720, cysteine 188-cysteine 441, and cysteine 649-cysteine 772. N-linked (GlcNAc...) asparagine glycosylation is found at asparagine 255 and asparagine 322. Zn(2+) is bound at residue histidine 612. Glutamate 613 is an active-site residue. Position 616 (histidine 616) interacts with Zn(2+). N-linked (GlcNAc...) asparagine glycosylation is present at asparagine 656. Glutamate 672 lines the Zn(2+) pocket. The active-site Proton donor is aspartate 676.

The protein belongs to the peptidase M13 family. The cofactor is Zn(2+).

The protein resides in the membrane. In terms of biological role, may contribute to the degradation of peptide hormones and be involved in the inactivation of neuronal peptides. The sequence is that of Endothelin-converting enzyme-like 1 (Ecel1) from Mus musculus (Mouse).